The primary structure comprises 410 residues: Divergent protein kinase domain 1A (410 aa).

The Cytoplasmic portion of the chain corresponds to 1–5 (MARLS). Residues 6–26 (YVRIKYLFFSWLAVFIGSWVI) form a helical membrane-spanning segment. At 27-410 (YVRYNSYTEL…WKKISHTNDS (384 aa)) the chain is on the lumenal side.

This sequence belongs to the DIPK family. In terms of processing, among the many cysteines in the lumenal domain, most are probably involved in disulfide bonds.

The protein resides in the endoplasmic reticulum membrane. This is Divergent protein kinase domain 1A (dipk1a) from Xenopus laevis (African clawed frog).